We begin with the raw amino-acid sequence, 161 residues long: Probable chemoreceptor glutamine deamidase CheD (161 aa).

The protein belongs to the CheD family.

It carries out the reaction L-glutaminyl-[protein] + H2O = L-glutamyl-[protein] + NH4(+). Probably deamidates glutamine residues to glutamate on methyl-accepting chemotaxis receptors (MCPs), playing an important role in chemotaxis. The protein is Probable chemoreceptor glutamine deamidase CheD of Trichlorobacter lovleyi (strain ATCC BAA-1151 / DSM 17278 / SZ) (Geobacter lovleyi).